The sequence spans 348 residues: Dihydroorotase (348 aa).

H17 and H19 together coordinate Zn(2+). Substrate is bound by residues 19–21 and N45; that span reads HLR. Residues K103, H140, and H178 each coordinate Zn(2+). The residue at position 103 (K103) is an N6-carboxylysine. H140 contributes to the substrate binding site. A substrate-binding site is contributed by L223. D251 is a binding site for Zn(2+). Residue D251 is part of the active site. Substrate-binding residues include H255 and A267.

The protein belongs to the metallo-dependent hydrolases superfamily. DHOase family. Class II DHOase subfamily. Homodimer. Requires Zn(2+) as cofactor.

The enzyme catalyses (S)-dihydroorotate + H2O = N-carbamoyl-L-aspartate + H(+). The protein operates within pyrimidine metabolism; UMP biosynthesis via de novo pathway; (S)-dihydroorotate from bicarbonate: step 3/3. Functionally, catalyzes the reversible cyclization of carbamoyl aspartate to dihydroorotate. This Shigella boydii serotype 4 (strain Sb227) protein is Dihydroorotase.